Here is a 201-residue protein sequence, read N- to C-terminus: Endoribonuclease YbeY (201 aa).

Histidine 120, histidine 124, and histidine 130 together coordinate Zn(2+). The disordered stretch occupies residues 151-201; the sequence is DGADGADGADGARGAADGAADGGEGRRGDQGRRGDQGRGGGAGEPPAAPAR. Residues 173-186 show a composition bias toward basic and acidic residues; sequence GEGRRGDQGRRGDQ.

It belongs to the endoribonuclease YbeY family. It depends on Zn(2+) as a cofactor.

The protein localises to the cytoplasm. Single strand-specific metallo-endoribonuclease involved in late-stage 70S ribosome quality control and in maturation of the 3' terminus of the 16S rRNA. This chain is Endoribonuclease YbeY, found in Frankia casuarinae (strain DSM 45818 / CECT 9043 / HFP020203 / CcI3).